The chain runs to 152 residues: Anaerobic nitrite reductase HBI (152 aa).

Residues 2-151 enclose the Globin domain; that stretch reads ALTEKQEALL…LVATIKAEMK (150 aa). Positions 35–39 match the Homodimerization motif; the sequence is EAAPE. S45, K59, H63, R93, and H98 together coordinate heme b. Positions 105 to 117 match the Homodimerization motif; sequence DPHFEVMKGALLG.

This sequence belongs to the plant globin family. Homodimer. Requires heme b as cofactor. In terms of tissue distribution, root nodules.

The protein resides in the cytoplasm. It localises to the nucleus. It carries out the reaction Fe(III)-heme b-[protein] + nitric oxide + H2O = Fe(II)-heme b-[protein] + nitrite + 2 H(+). Functionally, phytoglobin that reduces nitrite to nitric oxide (NO) under anoxic conditions (e.g. during flooding or in waterlogged soil) and upon root nodulation. Required for general plant development and during nodulation, especially for the onset of symbiosis. Monitors nitric oxide (NO) levels during early phase of the nitrogen-fixing symbiosis and buffers oxygen in functioning nodules. May not function as an oxygen storage or transport protein. Has an unusually high affinity for O(2) through a hexacoordinate heme iron because of a very low dissociation constant. The polypeptide is Anaerobic nitrite reductase HBI (Casuarina glauca (Swamp oak)).